The following is a 429-amino-acid chain: Serine--tRNA ligase (429 aa).

235–237 lines the L-serine pocket; that stretch reads TAE. 266-268 lines the ATP pocket; that stretch reads RSE. An L-serine-binding site is contributed by Glu-289. ATP is bound at residue 353–356; that stretch reads EISS. L-serine is bound at residue Ser-389.

It belongs to the class-II aminoacyl-tRNA synthetase family. Type-1 seryl-tRNA synthetase subfamily. In terms of assembly, homodimer. The tRNA molecule binds across the dimer.

Its subcellular location is the cytoplasm. It catalyses the reaction tRNA(Ser) + L-serine + ATP = L-seryl-tRNA(Ser) + AMP + diphosphate + H(+). The catalysed reaction is tRNA(Sec) + L-serine + ATP = L-seryl-tRNA(Sec) + AMP + diphosphate + H(+). It functions in the pathway aminoacyl-tRNA biosynthesis; selenocysteinyl-tRNA(Sec) biosynthesis; L-seryl-tRNA(Sec) from L-serine and tRNA(Sec): step 1/1. In terms of biological role, catalyzes the attachment of serine to tRNA(Ser). Is also able to aminoacylate tRNA(Sec) with serine, to form the misacylated tRNA L-seryl-tRNA(Sec), which will be further converted into selenocysteinyl-tRNA(Sec). The protein is Serine--tRNA ligase of Haemophilus influenzae (strain PittGG).